The primary structure comprises 166 residues: uncharacterized protein (166 aa).

Residues 34–54 traverse the membrane as a helical segment; that stretch reads FWGKVLVLTFGIICVVFVIFM. 2 disordered regions span residues 73–93 and 123–166; these read QRTQHSIHRRERSSSGASQQF and TSTP…NDEV.

Its subcellular location is the vacuole membrane. This is an uncharacterized protein from Schizosaccharomyces pombe (strain 972 / ATCC 24843) (Fission yeast).